A 439-amino-acid polypeptide reads, in one-letter code: Testican-1 (439 aa).

An N-terminal signal peptide occupies residues 1–21 (MPAIAVLAAAAAAWCFLQVES). Disulfide bonds link cysteine 86-cysteine 97, cysteine 91-cysteine 107, cysteine 136-cysteine 166, cysteine 139-cysteine 159, and cysteine 148-cysteine 180. The Kazal-like domain occupies 130–182 (PSNLVKCKPCPVAQSAMVCGSDGHSYTSKCKLEFHACSTGKSLATLCDGPCPC). Threonine 228 is a glycosylation site (O-linked (GalNAc...) threonine). In terms of domain architecture, Thyroglobulin type-1 spans 310–376 (GLPCQNEMNR…GSRKQGAVSC (67 aa)). Disulfide bonds link cysteine 313/cysteine 337, cysteine 348/cysteine 355, and cysteine 357/cysteine 376. Serine 383 and serine 388 each carry an O-linked (Xyl...) (glycosaminoglycan) serine glycan. A disordered region spans residues 415–439 (VHTRAVTEDDEDEDDDKEDEVGYIW). The span at 422 to 439 (EDDEDEDDDKEDEVGYIW) shows a compositional bias: acidic residues.

O-glycosylated. Glycosaminoglycan that contains chondroitin sulfate and heparan sulfate.

It is found in the secreted. Its subcellular location is the extracellular space. The protein localises to the extracellular matrix. May play a role in cell-cell and cell-matrix interactions. May contribute to various neuronal mechanisms in the central nervous system. The protein is Testican-1 (SPOCK1) of Homo sapiens (Human).